We begin with the raw amino-acid sequence, 410 residues long: Methylamine dehydrogenase heavy chain (410 aa).

A signal peptide spans M1–A35.

It belongs to the aromatic amine dehydrogenase heavy chain family. In terms of assembly, tetramer of two light and two heavy chains.

It is found in the periplasm. The enzyme catalyses 2 oxidized [amicyanin] + methylamine + H2O = 2 reduced [amicyanin] + formaldehyde + NH4(+) + 2 H(+). In terms of biological role, methylamine dehydrogenase carries out the oxidation of methylamine. Electrons are passed from methylamine dehydrogenase to amicyanin. This Methylorubrum extorquens (strain ATCC 14718 / DSM 1338 / JCM 2805 / NCIMB 9133 / AM1) (Methylobacterium extorquens) protein is Methylamine dehydrogenase heavy chain (mauB).